The following is a 151-amino-acid chain: UPF0251 protein Ctha_0452 (151 aa).

It belongs to the UPF0251 family.

This chain is UPF0251 protein Ctha_0452, found in Chloroherpeton thalassium (strain ATCC 35110 / GB-78).